The chain runs to 326 residues: Putative cell agglutination protein pfl9 (326 aa).

The N-terminal stretch at 1 to 21 (MNVVKYIIFSFALAPLLLVNA) is a signal peptide. Asn25 carries N-linked (GlcNAc...) asparagine glycosylation. A run of 2 repeats spans residues 103 to 137 (STIT…IPTA) and 138 to 175 (GTFT…TPSC). The tract at residues 103–175 (STITTTITSG…GEVEVITPSC (73 aa)) is 2 X 36 AA approximate tandem repeats. Residues 164-326 (QSGEVEVITP…RANDVTLQLY (163 aa)) form the DIPSY domain.

This sequence belongs to the mam3/map4 family.

The protein resides in the cell surface. Its function is as follows. May be involved in agglutination during conjugation or other aspects of colony formation. Induces flocculation when overexpressed. The sequence is that of Putative cell agglutination protein pfl9 from Schizosaccharomyces pombe (strain 972 / ATCC 24843) (Fission yeast).